A 159-amino-acid chain; its full sequence is MTLLIDLIDETGQVSKEQLEEVEKLLQFAADALEVKDQAEVSVTIVSNEEIHQINKEYRGKDAPTDVISFALEEEGEGEIEIIGADDIPPVLGDIIISVDRTKEQAEEYGHSFMRELGFLTIHGFLHLLGFDHMTEEDEKEMFAKQTKILDDYGLSRSS.

Residues histidine 123, histidine 127, and histidine 133 each coordinate Zn(2+).

The protein belongs to the endoribonuclease YbeY family. Requires Zn(2+) as cofactor.

The protein resides in the cytoplasm. Single strand-specific metallo-endoribonuclease involved in late-stage 70S ribosome quality control and in maturation of the 3' terminus of the 16S rRNA. This chain is Endoribonuclease YbeY, found in Bacillus pumilus (strain SAFR-032).